Reading from the N-terminus, the 20-residue chain is Protein PR-L3 (20 aa).

This sequence belongs to the BetVI family.

This Lupinus luteus (European yellow lupine) protein is Protein PR-L3.